The chain runs to 187 residues: Thermosensitive gluconokinase (187 aa).

An ATP-binding site is contributed by 10–17 (GVSGSGKT).

The protein belongs to the gluconokinase GntK/GntV family.

The catalysed reaction is D-gluconate + ATP = 6-phospho-D-gluconate + ADP + H(+). The protein operates within carbohydrate acid metabolism; L-idonate degradation. The sequence is that of Thermosensitive gluconokinase (idnK) from Escherichia coli (strain K12).